A 128-amino-acid polypeptide reads, in one-letter code: Glycine cleavage system H protein (128 aa).

A Lipoyl-binding domain is found at 25–107 (TFKVGITDHA…YEAGWLFTVR (83 aa)). K66 bears the N6-lipoyllysine mark.

Belongs to the GcvH family. The glycine cleavage system is composed of four proteins: P, T, L and H. Requires (R)-lipoate as cofactor.

Functionally, the glycine cleavage system catalyzes the degradation of glycine. The H protein shuttles the methylamine group of glycine from the P protein to the T protein. The polypeptide is Glycine cleavage system H protein (Kocuria rhizophila (strain ATCC 9341 / DSM 348 / NBRC 103217 / DC2201)).